We begin with the raw amino-acid sequence, 430 residues long: Glutamate-1-semialdehyde 2,1-aminomutase (430 aa).

An N6-(pyridoxal phosphate)lysine modification is found at Lys265.

The protein belongs to the class-III pyridoxal-phosphate-dependent aminotransferase family. HemL subfamily. In terms of assembly, homodimer. Pyridoxal 5'-phosphate is required as a cofactor.

The protein localises to the cytoplasm. The catalysed reaction is (S)-4-amino-5-oxopentanoate = 5-aminolevulinate. It participates in porphyrin-containing compound metabolism; protoporphyrin-IX biosynthesis; 5-aminolevulinate from L-glutamyl-tRNA(Glu): step 2/2. The protein is Glutamate-1-semialdehyde 2,1-aminomutase of Shewanella sp. (strain MR-7).